The sequence spans 811 residues: RFX-like DNA-binding protein RFX1 (811 aa).

Disordered regions lie at residues 48–92 (EPTS…TYLP) and 111–156 (LLHQ…QRQP). Over residues 51–70 (SRGSNDNSNGPSNGSSVNSN) the composition is skewed to low complexity. Over residues 140–149 (SPTPTQPPAQ) the composition is skewed to pro residues. S173 is modified (phosphoserine). A disordered region spans residues 181-222 (KSEETLNNNPPTAAKRTNTFPSIPSSTKKQKTSQEKRISSIS). The segment covering 185 to 204 (TLNNNPPTAAKRTNTFPSIP) has biased composition (polar residues). The RFX-type winged-helix DNA-binding region spans 285-360 (ALLWLMKNCK…YHYCGLKLTV (76 aa)). Positions 377 to 391 (LVHNNDPISPLSSPS) are enriched in low complexity. The interval 377-461 (LVHNNDPISP…AANNPTGTLS (85 aa)) is disordered. Positions 409-428 (NRKSLSRTGSPVKQSSNDNP) are enriched in polar residues. Residues 434 to 445 (ESQHPNETEANK) show a composition bias toward basic and acidic residues.

The protein belongs to the RFX family.

The sequence is that of RFX-like DNA-binding protein RFX1 (RFX1) from Saccharomyces cerevisiae (strain ATCC 204508 / S288c) (Baker's yeast).